A 479-amino-acid polypeptide reads, in one-letter code: Cobyric acid synthase (479 aa).

Residues T250 to A442 form the GATase cobBQ-type domain. The active-site Nucleophile is the C331. H434 is a catalytic residue.

This sequence belongs to the CobB/CobQ family. CobQ subfamily.

It functions in the pathway cofactor biosynthesis; adenosylcobalamin biosynthesis. Catalyzes amidations at positions B, D, E, and G on adenosylcobyrinic A,C-diamide. NH(2) groups are provided by glutamine, and one molecule of ATP is hydrogenolyzed for each amidation. In Variovorax paradoxus (strain S110), this protein is Cobyric acid synthase.